The following is a 486-amino-acid chain: Serine/threonine-protein kinase 4 (486 aa).

The Protein kinase domain maps to 29-280; sequence FDVLEKLGEG…AIQLLQHPFV (252 aa). Residues 35-43 and Lys-58 contribute to the ATP site; that span reads LGEGSYGSV. Asp-148 functions as the Proton acceptor in the catalytic mechanism. Position 182 is a phosphothreonine; by autocatalysis (Thr-182). Residues 288 to 324 are a coiled coil; that stretch reads ILRDLINEAMDIKLKRQEAQQRELDQEDEENSEEDET. The segment at 305–332 is disordered; the sequence is EAQQRELDQEDEENSEEDETDSGTMVRA. Positions 312–325 are enriched in acidic residues; the sequence is DQEDEENSEEDETD. The 48-residue stretch at 432–479 folds into the SARAH domain; it reads YEFLKTWSVDELQRRLSALDPMMEQEIEEIRQKYQSKRQPILDAIEAK.

The protein belongs to the protein kinase superfamily. STE Ser/Thr protein kinase family. STE20 subfamily. Homodimer; mediated via the coiled-coil region. The cofactor is Mg(2+). Proteolytically cleaved by caspase-3 during apoptosis at Asp-325 resulting in a 37 kDa form. Proteolytic cleavage results in kinase activation and nuclear translocation of the truncated form (MST1/N).

The protein localises to the cytoplasm. The protein resides in the nucleus. It catalyses the reaction L-seryl-[protein] + ATP = O-phospho-L-seryl-[protein] + ADP + H(+). The catalysed reaction is L-threonyl-[protein] + ATP = O-phospho-L-threonyl-[protein] + ADP + H(+). Its activity is regulated as follows. The C-terminal non-catalytic region inhibits the kinase activity, the enzyme is activated by caspase-cleavage. Homodimerization and autophosphorylation of Thr-182 is also required for full activation. Functionally, stress-activated, pro-apoptotic kinase which, following caspase-cleavage, enters the nucleus and induces chromatin condensation followed by internucleosomal DNA fragmentation. Key component of the Hippo signaling pathway which plays a pivotal role in organ size control and tumor suppression by restricting proliferation and promoting apoptosis. The core of this pathway is composed of a kinase cascade wherein STK3/MST2 and STK4/MST1, in complex with its regulatory protein SAV1, phosphorylates and activates LATS1/2 in complex with its regulatory protein MOB1, which in turn phosphorylates and inactivates YAP1 oncoprotein and WWTR1/TAZ. Phosphorylation of YAP1 by LATS2 inhibits its translocation into the nucleus to regulate cellular genes important for cell proliferation, cell death, and cell migration. Phosphorylates 'Ser-14' of histone H2B (H2BS14ph) during apoptosis. Phosphorylates FOXO3 upon oxidative stress, which results in its nuclear translocation and cell death initiation. This chain is Serine/threonine-protein kinase 4 (STK4), found in Gallus gallus (Chicken).